Reading from the N-terminus, the 347-residue chain is MRIEEDLKLGFKDVLIRPKRSTLKSRSDVELERQFTFKHSGQSWSGVPIIAANMDTVGTFSMASALASFDILTAVHKHYSVEEWQAFINNSSADVLKHVMVSTGTSDADFEKTKQILDLNPALNFVCIDVANGYSEHFVQFVAKAREAWPTKTICAGNVVTGEMCEELILSGADIVKVGIGPGSVCTTRVKTGVGYPQLSAVIECADAAHGLGGMIVSDGGCTTPGDVAKAFGGGADFVMLGGMLAGHEESGGRIVEENGEKFMLFYGMSSESAMKRHVGCVAEYRAAEGKTVKLPLRGPVENTARDILGGLRSACTYVGASRLKELTKRTTFIRVQEQENRIFNNL.

NADP(+) is bound at residue 108–131 (ADFEKTKQILDLNPALNFVCIDVA). The K(+) site is built by glycine 181 and glycine 183. Catalysis depends on cysteine 186, which acts as the Thioimidate intermediate. 216-239 (IVSDGGCTTPGDVAKAFGGGADFV) is an NADP(+) binding site.

This sequence belongs to the IMPDH/GMPR family. GuaC type 1 subfamily. In terms of assembly, homotetramer.

The catalysed reaction is IMP + NH4(+) + NADP(+) = GMP + NADPH + 2 H(+). In terms of biological role, catalyzes the irreversible NADPH-dependent deamination of GMP to IMP. It functions in the conversion of nucleobase, nucleoside and nucleotide derivatives of G to A nucleotides, and in maintaining the intracellular balance of A and G nucleotides. The sequence is that of GMP reductase from Escherichia coli (strain SMS-3-5 / SECEC).